The sequence spans 242 residues: Probable L-ribulose-5-phosphate 4-epimerase UlaF (242 aa).

Residues glycine 31–asparagine 32, serine 48–glycine 49, and serine 78–serine 79 contribute to the substrate site. 3 residues coordinate Zn(2+): aspartate 80, histidine 99, and histidine 101. Catalysis depends on aspartate 124, which acts as the Proton donor/acceptor. Histidine 175 serves as a coordination point for Zn(2+). Residue tyrosine 234 is the Proton donor/acceptor of the active site.

The protein belongs to the aldolase class II family. AraD/FucA subfamily. The cofactor is Zn(2+).

The enzyme catalyses L-ribulose 5-phosphate = D-xylulose 5-phosphate. It functions in the pathway cofactor degradation; L-ascorbate degradation; D-xylulose 5-phosphate from L-ascorbate: step 4/4. Functionally, catalyzes the isomerization of L-ribulose 5-phosphate to D-xylulose 5-phosphate. Is involved in the anaerobic L-ascorbate utilization. The protein is Probable L-ribulose-5-phosphate 4-epimerase UlaF of Mycoplasma pneumoniae (strain ATCC 29342 / M129 / Subtype 1) (Mycoplasmoides pneumoniae).